The chain runs to 123 residues: MPPKTSGKAAKKAGKAQKNITKTDKKKKRRRKESYAIYIYKVLKQVHPDTGISSKAMSIMNSFVNDIFERIAAEASRLAHYNKRSTITSREIQTAVRLLLPGELAKHAVSEGTKAVTKYTSSK.

The tract at residues 1-30 (MPPKTSGKAAKKAGKAQKNITKTDKKKKRR) is disordered. Pro2 is subject to N-methylproline; partial. The residue at position 44 (Lys44) is an N6-succinyllysine. Ser110 carries O-linked (GlcNAc) serine glycosylation. N6-succinyllysine occurs at positions 114 and 118. A Glycyl lysine isopeptide (Lys-Gly) (interchain with G-Cter in ubiquitin) cross-link involves residue Lys118.

It belongs to the histone H2B family. As to quaternary structure, the nucleosome is a histone octamer containing two molecules each of H2A, H2B, H3 and H4 assembled in one H3-H4 heterotetramer and two H2A-H2B heterodimers. The octamer wraps approximately 147 bp of DNA. Post-translationally, phosphorylated by the catalytic component of the Dbf4-dependent kinase (DDK) complex Cdc7. Monoubiquitination of Lys-118 by Bre1 gives a specific tag for epigenetic transcriptional activation and is also prerequisite for histone H3 'Lys-4' and 'Lys-79' methylation. Deubiquitination of Lys-118 by the SAGA complex is involved in activating transcription of a large subset of genes. In terms of processing, methylation at Pro-2 increases upon heat shock. Post-translationally, glcNAcylation at Ser-110 promotes monoubiquitination of Lys-118. It fluctuates in response to extracellular glucose, and associates with transcribed genes.

The protein localises to the nucleus. It is found in the chromosome. In terms of biological role, core component of nucleosome. Nucleosomes wrap and compact DNA into chromatin, limiting DNA accessibility to the cellular machineries which require DNA as a template. Histones thereby play a central role in transcription regulation, DNA repair, DNA replication and chromosomal stability. DNA accessibility is regulated via a complex set of post-translational modifications of histones, also called histone code, and nucleosome remodeling. This is Histone H2B (His2B) from Drosophila yakuba (Fruit fly).